The following is a 72-amino-acid chain: UPF0729 protein C18orf32 homolog (72 aa).

Residues 1-33 form a necessary for its localzation to the endoplasmic reticulum and lipid droplets region; that stretch reads MVCIPCIVIPVLLWIFKKFLEPYIYPVVSRIWP. Residues 45–72 form a disordered region; it reads TGKVDCKGADTNGFSTKGPTEVSDKKKD.

Belongs to the UPF0729 family. Interacts with DERL1 and AMFR. Undergoes ER-associated degradation (ERAD).

It localises to the endoplasmic reticulum. The protein resides in the lipid droplet. Functionally, may activate the NF-kappa-B signaling pathway. The protein is UPF0729 protein C18orf32 homolog of Rattus norvegicus (Rat).